A 487-amino-acid chain; its full sequence is Protein nucleotidyltransferase YdiU (487 aa).

Positions 90, 92, 93, 113, 125, 126, 176, and 183 each coordinate ATP. D252 (proton acceptor) is an active-site residue. Mg(2+) is bound by residues N253 and D262. D262 contributes to the ATP binding site.

Belongs to the SELO family. Mg(2+) is required as a cofactor. Mn(2+) serves as cofactor.

It catalyses the reaction L-seryl-[protein] + ATP = 3-O-(5'-adenylyl)-L-seryl-[protein] + diphosphate. It carries out the reaction L-threonyl-[protein] + ATP = 3-O-(5'-adenylyl)-L-threonyl-[protein] + diphosphate. The catalysed reaction is L-tyrosyl-[protein] + ATP = O-(5'-adenylyl)-L-tyrosyl-[protein] + diphosphate. The enzyme catalyses L-histidyl-[protein] + UTP = N(tele)-(5'-uridylyl)-L-histidyl-[protein] + diphosphate. It catalyses the reaction L-seryl-[protein] + UTP = O-(5'-uridylyl)-L-seryl-[protein] + diphosphate. It carries out the reaction L-tyrosyl-[protein] + UTP = O-(5'-uridylyl)-L-tyrosyl-[protein] + diphosphate. Its function is as follows. Nucleotidyltransferase involved in the post-translational modification of proteins. It can catalyze the addition of adenosine monophosphate (AMP) or uridine monophosphate (UMP) to a protein, resulting in modifications known as AMPylation and UMPylation. The polypeptide is Protein nucleotidyltransferase YdiU (Ectopseudomonas mendocina (strain ymp) (Pseudomonas mendocina)).